The following is a 476-amino-acid chain: MKVRVRLAPSPTGTLHLGTARTALFNWLFAKKEGGTFLLRIEDTDIERSREEYINDIYDGLKWLGINWDESPTIQSERVNEHKQIIKTLVDKGFAYKCYASEAELDEMRETQKRNGLAPKYDNRHRNLTPEQESEFIKLGRDPVIRFKISDEKLISWNDLIRGKMTWSGKDLGGDMVIARRAPGNSIGDPLYNLVVVADDSAMKISHVIRGEDHLANTAKQILLYEALDLNIPVFAHTPLILNSEGKKLSKRDGVTSISEFKKMGYTSEAMANYMTLLGWSVPEGINERFNISEVSEIFSFKKVNKASAKFDWDKLNWLNSQVIHEMSAETLLENLEPLFKENGWHLPSHEWGINLVGLIGPSMVLINDGVDQAKPFFEEQELSDDGKKQLEIKEAAVILKFILEKLADSDAASFSKEKALDLIDQATKSCKVKKGVVMKSLRAALFGTLNGPDLIQSWVLLSRFSKDRARISRLI.

Positions 9–19 match the 'HIGH' region motif; sequence PSPTGTLHLGT. The 'KMSKS' region signature appears at 248–252; it reads KLSKR. Position 251 (Lys-251) interacts with ATP.

It belongs to the class-I aminoacyl-tRNA synthetase family. Glutamate--tRNA ligase type 1 subfamily. Monomer.

It localises to the cytoplasm. The catalysed reaction is tRNA(Glu) + L-glutamate + ATP = L-glutamyl-tRNA(Glu) + AMP + diphosphate. Catalyzes the attachment of glutamate to tRNA(Glu) in a two-step reaction: glutamate is first activated by ATP to form Glu-AMP and then transferred to the acceptor end of tRNA(Glu). The protein is Glutamate--tRNA ligase of Prochlorococcus marinus (strain NATL1A).